Consider the following 135-residue polypeptide: Small ribosomal subunit protein uS8 (135 aa).

This sequence belongs to the universal ribosomal protein uS8 family. In terms of assembly, part of the 30S ribosomal subunit. Contacts proteins S5 and S12.

Functionally, one of the primary rRNA binding proteins, it binds directly to 16S rRNA central domain where it helps coordinate assembly of the platform of the 30S subunit. This is Small ribosomal subunit protein uS8 from Corynebacterium urealyticum (strain ATCC 43042 / DSM 7109).